Consider the following 336-residue polypeptide: Mitochondrial import receptor subunit TOM40 homolog (336 aa).

Residues 1-58 (MGNVLAASSPAPPAAGSPPAPGLVSVPPGFTMPPVAGLTPTPDKKETQEDRLPNPGTF) are disordered. The segment covering 10 to 21 (PAPPAAGSPPAP) has biased composition (pro residues). Basic and acidic residues predominate over residues 42 to 52 (PDKKETQEDRL).

The protein belongs to the Tom40 family. In terms of assembly, forms part of the preprotein translocase complex of the outer mitochondrial membrane (TOM complex). Interacts with mitochondrial targeting sequences.

It is found in the mitochondrion outer membrane. Channel-forming protein essential for import of protein precursors into mitochondria. The chain is Mitochondrial import receptor subunit TOM40 homolog (tomm40) from Xenopus tropicalis (Western clawed frog).